The chain runs to 457 residues: Cysteine--tRNA ligase (457 aa).

Cys-27 contacts Zn(2+). The 'HIGH' region signature appears at 29–39 (PTVYDFAHIGN). The Zn(2+) site is built by Cys-211, His-236, and Glu-240. Residues 269-273 (KMSKS) carry the 'KMSKS' region motif. Lys-272 contributes to the ATP binding site.

Belongs to the class-I aminoacyl-tRNA synthetase family. Monomer. The cofactor is Zn(2+).

The protein localises to the cytoplasm. It catalyses the reaction tRNA(Cys) + L-cysteine + ATP = L-cysteinyl-tRNA(Cys) + AMP + diphosphate. The sequence is that of Cysteine--tRNA ligase from Ehrlichia ruminantium (strain Welgevonden).